Consider the following 817-residue polypeptide: Transcription factor yanR (817 aa).

Residues 19-46 constitute a DNA-binding region (zn(2)-C6 fungal-type); the sequence is CIVCRRRKVRCGREHPECANCVRMKENC. Disordered stretches follow at residues 102-161, 180-218, and 733-775; these read GNVL…PQVD, HHAS…YSGL, and SLSS…VADS. Positions 113–127 are enriched in pro residues; that stretch reads LPRPTISPASAPPPQ. A compositionally biased stretch (polar residues) spans 146–158; the sequence is SSTILTPAPSSHP. Positions 184-195 are enriched in low complexity; that stretch reads SRAGTSRTSSVS. 2 stretches are compositionally biased toward polar residues: residues 208–217 and 748–760; these read APSTSTSYSG and EAPS…QMPS.

Its subcellular location is the nucleus. Functionally, transcription factor that regulates the expression of the gene cluster that mediates the biosynthesis of yanuthone D, a fungal isoprenoid epoxycyclohexenone that acts as an antibiotic against fungi and bacteria. The polypeptide is Transcription factor yanR (Aspergillus niger (strain ATCC 1015 / CBS 113.46 / FGSC A1144 / LSHB Ac4 / NCTC 3858a / NRRL 328 / USDA 3528.7)).